The following is a 244-amino-acid chain: 23S rRNA (guanosine-2'-O-)-methyltransferase RlmB (244 aa).

Residues Gly-196, Ile-216, and Leu-225 each coordinate S-adenosyl-L-methionine.

Belongs to the class IV-like SAM-binding methyltransferase superfamily. RNA methyltransferase TrmH family. RlmB subfamily. As to quaternary structure, homodimer.

The protein localises to the cytoplasm. The enzyme catalyses guanosine(2251) in 23S rRNA + S-adenosyl-L-methionine = 2'-O-methylguanosine(2251) in 23S rRNA + S-adenosyl-L-homocysteine + H(+). Functionally, specifically methylates the ribose of guanosine 2251 in 23S rRNA. This is 23S rRNA (guanosine-2'-O-)-methyltransferase RlmB from Pectobacterium atrosepticum (strain SCRI 1043 / ATCC BAA-672) (Erwinia carotovora subsp. atroseptica).